The following is a 475-amino-acid chain: MESKALLVLTLAVWLQSLTASRGGVAAADQRRDFIDIESKFALRTPEDTAEDTCHLIPGVAESVATCHFNHSSKTFMVIHGWTVTGMYESWVPKLVAALYKREPDSNVIVVDWLSRAQEHYPVSAGYTKLVGQDVARFINWMEEEFNYPLDNVHLLGYSLGAHAAGIAGSLTNKKVNRITGLDPAGPNFEYAEAPSRLSPDDADFVDVLHTFTRGSPGRSIGIQKPVGHVDIYPNGGTFQPGCNIGEAIRVIAERGLGDVDQLVKCSHERSIHLFIDSLLNEENPSKAYRCSSKEAFEKGLCLSCRKNRCNNLGYEINKVRAKRSSKMYLKTRSQMPYKVFHYQVKIHFSGTESETHTNQAFEISLYGTVAESENIPFTLPEVSTNKTYSFLIYTEVDIGELLMLKLKWKSDSYFSWSDWWSSPGFAIQKIRVKAGETQKKVIFCSREKVSHLQKGKAPAVFVKCHDKSLNKKSG.

A signal peptide spans 1–27; that stretch reads MESKALLVLTLAVWLQSLTASRGGVAA. Positions 32 to 53 are interaction with GPIHBP1; it reads RDFIDIESKFALRTPEDTAEDT. C54 and C67 are disulfide-bonded. Residue N70 is glycosylated (N-linked (GlcNAc...) asparagine). Y121 carries the 3'-nitrotyrosine modification. The active-site Nucleophile is S159. D183 acts as the Charge relay system in catalysis. A 3'-nitrotyrosine modification is found at Y191. Ca(2+) is bound by residues A194, R197, S199, and D202. An intrachain disulfide couples C243 to C266. Positions 243 to 266 are essential for determining substrate specificity; the sequence is CNIGEAIRVIAERGLGDVDQLVKC. H268 (charge relay system) is an active-site residue. 2 disulfide bridges follow: C291–C310 and C302–C305. Residues 341–464 enclose the PLAT domain; it reads FHYQVKIHFS…KGKAPAVFVK (124 aa). At Y343 the chain carries 3'-nitrotyrosine. The N-linked (GlcNAc...) asparagine glycan is linked to N386. The tract at residues 417–421 is important for interaction with lipoprotein particles; the sequence is WSDWW. Residues 430 to 434 are important for heparin binding; the sequence is KIRVK. Positions 443–467 are interaction with GPIHBP1; that stretch reads IFCSREKVSHLQKGKAPAVFVKCHD. A disulfide bridge connects residues C445 and C465.

Belongs to the AB hydrolase superfamily. Lipase family. As to quaternary structure, homodimer. Interacts with GPIHBP1 with 1:1 stoichiometry. Interacts with APOC2; the interaction activates LPL activity in the presence of lipids. Interaction with heparan sulfate proteoglycans is required to protect LPL against loss of activity. Associates with lipoprotein particles in blood plasma. Interacts with LMF1 and SEL1L; interaction with SEL1L is required to prevent aggregation of newly synthesized LPL in the endoplasmic reticulum (ER), and for normal export of LPL from the ER to the extracellular space. Interacts with SORL1; SORL1 acts as a sorting receptor, promoting LPL localization to endosomes and later to lysosomes, leading to degradation of newly synthesized LPL. Tyrosine nitration after lipopolysaccharide (LPS) challenge down-regulates the lipase activity. As to expression, detected in blood plasma. Detected in milk (at protein level).

It is found in the cell membrane. It localises to the secreted. The protein localises to the extracellular space. Its subcellular location is the extracellular matrix. It carries out the reaction a triacylglycerol + H2O = a diacylglycerol + a fatty acid + H(+). The catalysed reaction is a 1,2-diacyl-sn-glycero-3-phosphocholine + H2O = a 2-acyl-sn-glycero-3-phosphocholine + a fatty acid + H(+). The enzyme catalyses 1,2,3-tri-(9Z-octadecenoyl)-glycerol + H2O = di-(9Z)-octadecenoylglycerol + (9Z)-octadecenoate + H(+). It catalyses the reaction 1,2-di-(9Z-octadecenoyl)-sn-glycero-3-phosphocholine + H2O = (9Z-octadecenoyl)-sn-glycero-3-phosphocholine + (9Z)-octadecenoate + H(+). It carries out the reaction 1,2,3-tributanoylglycerol + H2O = dibutanoylglycerol + butanoate + H(+). The catalysed reaction is 1,2-dihexadecanoyl-sn-glycero-3-phosphocholine + H2O = hexadecanoyl-sn-glycero-3-phosphocholine + hexadecanoate + H(+). Its activity is regulated as follows. The apolipoprotein APOC2 acts as a coactivator of LPL activity. Ca(2+) binding promotes protein stability and formation of the active homodimer. Interaction with GPIHBP1 protects LPL against inactivation by ANGPTL4. Inhibited by NaCl. In terms of biological role, key enzyme in triglyceride metabolism. Catalyzes the hydrolysis of triglycerides from circulating chylomicrons and very low density lipoproteins (VLDL), and thereby plays an important role in lipid clearance from the blood stream, lipid utilization and storage. Although it has both phospholipase and triglyceride lipase activities it is primarily a triglyceride lipase with low but detectable phospholipase activity. Mediates margination of triglyceride-rich lipoprotein particles in capillaries. Recruited to its site of action on the luminal surface of vascular endothelium by binding to GPIHBP1 and cell surface heparan sulfate proteoglycans. The protein is Lipoprotein lipase (LPL) of Homo sapiens (Human).